The following is a 236-amino-acid chain: uncharacterized protein (236 aa).

Residues 1-12 (MKLLGHRKSHGH) show a composition bias toward basic residues. Residues 1–108 (MKLLGHRKSH…KAANRARMTE (108 aa)) form a disordered region. Residues 13–31 (QRADASPDAGSKDGCRPDS) show a composition bias toward basic and acidic residues. Low complexity predominate over residues 32–47 (GRTSGSDTSRGSQTTG). Basic residues predominate over residues 52–65 (PTPKRNQSRRHTKK). The span at 67–78 (PVAPAPMTAAQA) shows a compositional bias: low complexity. Basic and acidic residues predominate over residues 90 to 108 (LSREERRAEKAANRARMTE). The next 2 membrane-spanning stretches (helical) occupy residues 142–162 (NLLG…FAVP) and 166–186 (FYLS…AIIL).

The protein resides in the cell membrane. This is an uncharacterized protein from Mycobacterium tuberculosis (strain CDC 1551 / Oshkosh).